Here is an 870-residue protein sequence, read N- to C-terminus: Suppressor of yeast profilin deletion (870 aa).

Over residues 252-267 (SSSSKEVVPNNASPAS) the composition is skewed to polar residues. 2 disordered regions span residues 252 to 298 (SSSS…RKSA) and 310 to 574 (SSSL…TLSS). Lysine 256 is covalently cross-linked (Glycyl lysine isopeptide (Lys-Gly) (interchain with G-Cter in ubiquitin)). The residue at position 264 (serine 264) is a Phosphoserine. The segment covering 283–292 (TEREKKSPQK) has biased composition (basic and acidic residues). The span at 310–323 (SSSLTHNDLMNNEF) shows a compositional bias: polar residues. Serine 331 is subject to Phosphoserine. Basic residues predominate over residues 333 to 342 (KSKKSSHTLR). Polar residues predominate over residues 367 to 378 (HIQASITETPNN). Residues 379-390 (SSTRVSSTATSS) are compositionally biased toward low complexity. Residues 398–409 (PTYSSSKSNNWT) show a composition bias toward polar residues. Residue threonine 416 is modified to Phosphothreonine. Residues 473–485 (PISISQPPLQPQS) are compositionally biased toward low complexity. A phosphoserine mark is found at serine 496 and serine 500. A compositionally biased stretch (polar residues) spans 497 to 514 (PSISLPTATVDNQPSGQV). The residue at position 577 (threonine 577) is a Phosphothreonine. The 261-residue stretch at 609–869 (QFGLNASIAE…TLTTGNYHGL (261 aa)) folds into the MHD domain.

It belongs to the SYP1 family. As to quaternary structure, interacts with CDC3, CDC10, CDC11, CDC12, EDE1 and EPS15.

It localises to the bud neck. Its function is as follows. Multi-functional protein that contributes to the endocytic process, but also to events that occur at the neck during budding and/or cytokinesis. Plays a role as an endocytic adapters with membrane-tubulation activity that associates with transmembrane cargo proteins and initiates the formation of endocytic sites. Contributes to the stabilization of the nascent clathrin-coated pit. Also plays a role in late endocytosis by mediating vesiculation. Involved in the regulation of cell cycle-dependent dynamics of the septin cytoskeleton by promoting septin turnover in different cell cycle stages. May act through the RHO2 signaling pathway to repolarize cortical actin patches in profilin-deficient cells. The sequence is that of Suppressor of yeast profilin deletion (SYP1) from Saccharomyces cerevisiae (strain ATCC 204508 / S288c) (Baker's yeast).